The following is a 194-amino-acid chain: Potassium-transporting ATPase KdpC subunit (194 aa).

The chain crosses the membrane as a helical span at residues 12-34 (LFLLLLTGGVYPLLTTALGQWWF).

It belongs to the KdpC family. In terms of assembly, the system is composed of three essential subunits: KdpA, KdpB and KdpC.

The protein localises to the cell inner membrane. Part of the high-affinity ATP-driven potassium transport (or Kdp) system, which catalyzes the hydrolysis of ATP coupled with the electrogenic transport of potassium into the cytoplasm. This subunit acts as a catalytic chaperone that increases the ATP-binding affinity of the ATP-hydrolyzing subunit KdpB by the formation of a transient KdpB/KdpC/ATP ternary complex. The chain is Potassium-transporting ATPase KdpC subunit from Salmonella choleraesuis (strain SC-B67).